Reading from the N-terminus, the 588-residue chain is Adenine deaminase (588 aa).

The protein belongs to the metallo-dependent hydrolases superfamily. Adenine deaminase family. As to quaternary structure, homodimer. It depends on Mn(2+) as a cofactor.

It catalyses the reaction adenine + H2O + H(+) = hypoxanthine + NH4(+). The polypeptide is Adenine deaminase (Escherichia coli O9:H4 (strain HS)).